The primary structure comprises 347 residues: Ribosomal RNA small subunit methyltransferase C (347 aa).

The protein belongs to the methyltransferase superfamily. RsmC family. As to quaternary structure, monomer.

It localises to the cytoplasm. It carries out the reaction guanosine(1207) in 16S rRNA + S-adenosyl-L-methionine = N(2)-methylguanosine(1207) in 16S rRNA + S-adenosyl-L-homocysteine + H(+). Its function is as follows. Specifically methylates the guanine in position 1207 of 16S rRNA in the 30S particle. This Shewanella baltica (strain OS185) protein is Ribosomal RNA small subunit methyltransferase C.